A 387-amino-acid chain; its full sequence is Protoheme IX farnesyltransferase, mitochondrial (387 aa).

8 helical membrane passes run 95–115 (LTVL…YPGL), 117–137 (FNTL…ANAF), 183–203 (FLVN…YMGI), 212–232 (IVNT…GWAA), 242–262 (PGGL…FNAF), 284–306 (ALNA…AYIS), 311–330 (GPWY…ARAW), and 345–365 (FFAS…CHMI).

This sequence belongs to the UbiA prenyltransferase family.

It localises to the mitochondrion membrane. It carries out the reaction heme b + (2E,6E)-farnesyl diphosphate + H2O = Fe(II)-heme o + diphosphate. Converts protoheme IX and farnesyl diphosphate to heme O. The chain is Protoheme IX farnesyltransferase, mitochondrial (cox10) from Schizosaccharomyces pombe (strain 972 / ATCC 24843) (Fission yeast).